Consider the following 102-residue polypeptide: Large ribosomal subunit protein bL21 (102 aa).

This sequence belongs to the bacterial ribosomal protein bL21 family. As to quaternary structure, part of the 50S ribosomal subunit. Contacts protein L20.

In terms of biological role, this protein binds to 23S rRNA in the presence of protein L20. In Bacillus cytotoxicus (strain DSM 22905 / CIP 110041 / 391-98 / NVH 391-98), this protein is Large ribosomal subunit protein bL21.